Here is a 320-residue protein sequence, read N- to C-terminus: MAETTVKPTKLAVIGAGAVGSTLAFAAAQRGIAREIVLEDIAKERVEAEVLDMQHGSSFYPTVSIDGSDDPEICRDADMVVITAGPRQKPGQSRLELVGATVNILKAIMPNLVKVAPNAIYMLITNPVDIATHVAQKLTGLPENQIFGSGTNLDSARLRFLIAQQTGVNVKNVHAYIAGEHGDSEVPLWESATIGGVPMCDWTPLPGHDPLDADKREEIHQEVKNAAYKIINGKGATNYAIGMSGVDIIEAVLHDTNRILPVSSMLKDFHGISDICMSVPTLLNRQGVNNTINTPVSDKELAALKRSAETLKETAAQFGF.

NAD(+) contacts are provided by residues 18–19 (AV), Asp-40, and Arg-45. Substrate contacts are provided by residues Gln-88, Arg-94, and 126 to 129 (NPVD). Residues 124–126 (ITN) and Ser-149 contribute to the NAD(+) site. 154 to 157 (DSAR) is a binding site for substrate. Residues Arg-159 and 171 to 176 (KNVHAY) contribute to the beta-D-fructose 1,6-bisphosphate site. The active-site Proton acceptor is the His-181. A Phosphotyrosine modification is found at Tyr-228. Thr-237 is a binding site for substrate.

It belongs to the LDH/MDH superfamily. LDH family. Homotetramer.

It is found in the cytoplasm. The enzyme catalyses (S)-lactate + NAD(+) = pyruvate + NADH + H(+). The protein operates within fermentation; pyruvate fermentation to lactate; (S)-lactate from pyruvate: step 1/1. With respect to regulation, allosterically activated by fructose 1,6-bisphosphate (FBP). Functionally, catalyzes the conversion of lactate to pyruvate. This chain is L-lactate dehydrogenase 2, found in Bifidobacterium longum subsp. longum (strain ATCC 15707 / DSM 20219 / JCM 1217 / NCTC 11818 / E194b).